We begin with the raw amino-acid sequence, 877 residues long: Dolichyl-phosphate-mannose--protein mannosyltransferase 1 (877 aa).

Asn83 carries an N-linked (GlcNAc...) asparagine glycan. Helical transmembrane passes span 109–129 and 150–170; these read FFMDVHPPLAKMLFGAVGAIG and YIFMRQFPALLGVGTVILCYL. Residue Asn195 is glycosylated (N-linked (GlcNAc...) asparagine). The next 4 membrane-spanning stretches (helical) occupy residues 196 to 216, 226 to 246, 252 to 272, and 291 to 311; these read VTISRYILLDSPLIFFIAAAI, IPFTFGWYRSLLATGIALGLA, VGLFTVAWVGFLCIYQLWFLI, and IILLGVPIALYLGFFAIHFQL. The 55-residue stretch at 340–394 folds into the MIR 1 domain; sequence TEQVGLGSVVTIRHVDTQGGYLHSHEHFYQTGSKQQQITLYPHLDSNNKWLIEPY. Asn395 and Asn400 each carry an N-linked (GlcNAc...) asparagine glycan. MIR domains lie at 403-462 and 472-528; these read FVPL…VEIV and QTFV…IETN. Helical transmembrane passes span 604–624, 643–663, 666–686, and 700–720; these read TWWAATLSIITFGTYVLVTVF, VQTFSYVLGWALHYLPFFIMG, LFLHHYLPALYFGILALGHFF, and FQQVAFVLVGLFSILSLVFYV. Asn721 carries N-linked (GlcNAc...) asparagine glycosylation. The disordered stretch occupies residues 778–877; the sequence is VVEAKQTPKA…EDESVHQVQQ (100 aa). Basic and acidic residues-rich tracts occupy residues 783-799, 807-816, and 847-857; these read QTPKAEPKLAKQDDHIE, VEEKEVKEEV, and NDEKSVEEKQQ.

The protein belongs to the glycosyltransferase 39 family. PMT1 and PMT2 form a functional heterodimer.

Its subcellular location is the endoplasmic reticulum membrane. The enzyme catalyses a di-trans,poly-cis-dolichyl beta-D-mannosyl phosphate + L-seryl-[protein] = 3-O-(alpha-D-mannosyl)-L-seryl-[protein] + a di-trans,poly-cis-dolichyl phosphate + H(+). It carries out the reaction a di-trans,poly-cis-dolichyl beta-D-mannosyl phosphate + L-threonyl-[protein] = 3-O-(alpha-D-mannosyl)-L-threonyl-[protein] + a di-trans,poly-cis-dolichyl phosphate + H(+). The protein operates within protein modification; protein glycosylation. Functionally, protein mannosyltransferase (PMT) involved in hyphal growth and drug sensitivity. Transfers mannose from Dol-P-mannose to Ser or Thr residues on proteins. PMT1, PMT2 and PMT4 account for most of the protein-O-glycosylation activity, while PMT5 and PMT6 may specifically modulate a much narrower spectrum of target proteins. Accounts for the O-glycosylation of the cell wall proteins KRE9, PIR2, RHD3, and ALS1, as well as the SEC20 t-SNARE component. O-glycosylation of SEC20 is essential for its stability. Required for filamentation and early phases of biofilm formation. The protein is Dolichyl-phosphate-mannose--protein mannosyltransferase 1 (PMT1) of Candida albicans (strain SC5314 / ATCC MYA-2876) (Yeast).